Reading from the N-terminus, the 208-residue chain is N-(5'-phosphoribosyl)anthranilate isomerase (208 aa).

It belongs to the TrpF family.

It carries out the reaction N-(5-phospho-beta-D-ribosyl)anthranilate = 1-(2-carboxyphenylamino)-1-deoxy-D-ribulose 5-phosphate. Its pathway is amino-acid biosynthesis; L-tryptophan biosynthesis; L-tryptophan from chorismate: step 3/5. The chain is N-(5'-phosphoribosyl)anthranilate isomerase from Methanothrix thermoacetophila (strain DSM 6194 / JCM 14653 / NBRC 101360 / PT) (Methanosaeta thermophila).